The primary structure comprises 337 residues: Glyceraldehyde-3-phosphate dehydrogenase (337 aa).

NAD(+)-binding positions include 12 to 13 (RI), Asp-34, and Arg-79. Residues 150 to 152 (SCT), Thr-181, 210 to 211 (TG), and Arg-233 each bind D-glyceraldehyde 3-phosphate. Cys-151 serves as the catalytic Nucleophile. Asn-315 contacts NAD(+).

Belongs to the glyceraldehyde-3-phosphate dehydrogenase family. Homotetramer.

It localises to the cytoplasm. The catalysed reaction is D-glyceraldehyde 3-phosphate + phosphate + NAD(+) = (2R)-3-phospho-glyceroyl phosphate + NADH + H(+). It participates in carbohydrate degradation; glycolysis; pyruvate from D-glyceraldehyde 3-phosphate: step 1/5. The protein is Glyceraldehyde-3-phosphate dehydrogenase (GPD) of Podospora anserina (Pleurage anserina).